Here is a 363-residue protein sequence, read N- to C-terminus: Insulin gene enhancer protein ISL-3 (363 aa).

LIM zinc-binding domains lie at 27 to 80 (CVGC…CKRD) and 89 to 143 (CAKC…RADH). Positions 191-250 (TTRVRTVLNEKQLHTLRTCYNANPRPDALMREQLVEMTGLSPRVIRVWFQNKRCKDKKRS) form a DNA-binding region, homeobox. The segment at 328–363 (FSESGSLGNSSGSDVTSLSSHLPDTPNSMVPSPVET) is disordered. Positions 329 to 340 (SESGSLGNSSGS) are enriched in low complexity. Polar residues predominate over residues 341–363 (DVTSLSSHLPDTPNSMVPSPVET).

The protein resides in the nucleus. Binds to one of the cis-acting domain of the insulin gene enhancer. May be involved in subtype specialization of primary motoneurons. The polypeptide is Insulin gene enhancer protein ISL-3 (isl3) (Oncorhynchus tshawytscha (Chinook salmon)).